A 756-amino-acid polypeptide reads, in one-letter code: 5-methyltetrahydropteroyltriglutamate--homocysteine methyltransferase (756 aa).

5-methyltetrahydropteroyltri-L-glutamate contacts are provided by residues 16–19 and K112; that span reads RELK. L-homocysteine contacts are provided by residues 432–434 and E485; that span reads IGS. L-methionine-binding positions include 432–434 and E485; that span reads IGS. Residues 516 to 517 and W562 each bind 5-methyltetrahydropteroyltri-L-glutamate; that span reads RC. D600 is a binding site for L-homocysteine. Position 600 (D600) interacts with L-methionine. E606 lines the 5-methyltetrahydropteroyltri-L-glutamate pocket. The Zn(2+) site is built by H642, C644, and E666. Residue H695 is the Proton donor of the active site. A Zn(2+)-binding site is contributed by C727.

This sequence belongs to the vitamin-B12 independent methionine synthase family. The cofactor is Zn(2+).

It catalyses the reaction 5-methyltetrahydropteroyltri-L-glutamate + L-homocysteine = tetrahydropteroyltri-L-glutamate + L-methionine. The protein operates within amino-acid biosynthesis; L-methionine biosynthesis via de novo pathway; L-methionine from L-homocysteine (MetE route): step 1/1. In terms of biological role, catalyzes the transfer of a methyl group from 5-methyltetrahydrofolate to homocysteine resulting in methionine formation. The sequence is that of 5-methyltetrahydropteroyltriglutamate--homocysteine methyltransferase from Haemophilus influenzae (strain ATCC 51907 / DSM 11121 / KW20 / Rd).